A 55-amino-acid polypeptide reads, in one-letter code: Protein CADMIUM TOLERANCE 1 (55 aa).

The helical transmembrane segment at 24–40 threads the bilayer; it reads GCLYACIFTALCCFCCY.

Belongs to the CYSTM1 family.

The protein localises to the cell membrane. The protein resides in the secreted. It localises to the cell wall. Confers resistance to heavy metal ions (e.g. cadmium (CdCl(2)) and copper (CuCl(2))) by chelating them at the plasma membrane of root cells, thus stopping their entry and reducing their accumulation. The protein is Protein CADMIUM TOLERANCE 1 of Echinochloa crus-galli subsp. caudata (Cockspur).